A 267-amino-acid chain; its full sequence is Syntaxin-72 (267 aa).

Residues Met-1–Asn-244 lie on the Cytoplasmic side of the membrane. A coiled-coil region spans residues Lys-53 to Leu-87. The t-SNARE coiled-coil homology domain maps to Glu-173 to Gln-235. A helical; Anchor for type IV membrane protein transmembrane segment spans residues Phe-245–Ala-265. Over Leu-266–Asn-267 the chain is Vesicular.

Belongs to the syntaxin family. In terms of assembly, part of the t-SNARE complex. Expressed in root, leaf, stem, flower and silique.

It localises to the membrane. Its function is as follows. Vesicle trafficking protein that functions in the secretory pathway. In Arabidopsis thaliana (Mouse-ear cress), this protein is Syntaxin-72 (SYP72).